Reading from the N-terminus, the 385-residue chain is 1-deoxy-D-xylulose 5-phosphate reductoisomerase (385 aa).

The NADPH site is built by Thr-10, Gly-11, Ser-12, Ile-13, Lys-37, and Asn-124. Lys-125 contributes to the 1-deoxy-D-xylulose 5-phosphate binding site. Glu-126 serves as a coordination point for NADPH. Asp-150 serves as a coordination point for Mn(2+). 1-deoxy-D-xylulose 5-phosphate-binding residues include Ser-151, Glu-152, Ser-176, and His-199. Residue Glu-152 participates in Mn(2+) binding. NADPH is bound at residue Gly-205. The 1-deoxy-D-xylulose 5-phosphate site is built by Ser-212, Asn-217, Lys-218, and Glu-221. Position 221 (Glu-221) interacts with Mn(2+).

It belongs to the DXR family. It depends on Mg(2+) as a cofactor. Mn(2+) is required as a cofactor.

The enzyme catalyses 2-C-methyl-D-erythritol 4-phosphate + NADP(+) = 1-deoxy-D-xylulose 5-phosphate + NADPH + H(+). Its pathway is isoprenoid biosynthesis; isopentenyl diphosphate biosynthesis via DXP pathway; isopentenyl diphosphate from 1-deoxy-D-xylulose 5-phosphate: step 1/6. In terms of biological role, catalyzes the NADPH-dependent rearrangement and reduction of 1-deoxy-D-xylulose-5-phosphate (DXP) to 2-C-methyl-D-erythritol 4-phosphate (MEP). This chain is 1-deoxy-D-xylulose 5-phosphate reductoisomerase, found in Clostridium botulinum (strain Langeland / NCTC 10281 / Type F).